A 273-amino-acid chain; its full sequence is Protein E6 (273 aa).

2 zinc fingers span residues 27 to 63 (CIFCGKLLGAAEKQLFKCTGLCIVWHKGWPYGTCRDC) and 100 to 140 (CTVC…CSSC).

Belongs to the papillomaviridae E6 protein family. Forms homodimers. Interacts with ubiquitin-protein ligase UBE3A/E6-AP; this interaction stimulates UBE3A ubiquitin activity. Interacts with host BAK1.

It localises to the host cytoplasm. Its subcellular location is the host nucleus. In terms of biological role, plays a major role in the induction and maintenance of cellular transformation. E6 associates with host UBE3A/E6-AP ubiquitin-protein ligase and modulates its activity. Protects host keratinocytes from apoptosis by mediating the degradation of host BAK1. May also inhibit host immune response. The sequence is that of Protein E6 from Sylvilagus floridanus (Cottontail rabbit).